Here is a 639-residue protein sequence, read N- to C-terminus: Mediator of RNA polymerase II transcription subunit 17 (639 aa).

This sequence belongs to the Mediator complex subunit 17 family. In terms of assembly, component of the Mediator complex.

The protein resides in the nucleus. In terms of biological role, component of the Mediator complex, a coactivator involved in the regulated transcription of nearly all RNA polymerase II-dependent genes. Mediator functions as a bridge to convey information from gene-specific regulatory proteins to the basal RNA polymerase II transcription machinery. Mediator is recruited to promoters by direct interactions with regulatory proteins and serves as a scaffold for the assembly of a functional preinitiation complex with RNA polymerase II and the general transcription factors. The sequence is that of Mediator of RNA polymerase II transcription subunit 17 (med17) from Xenopus tropicalis (Western clawed frog).